The primary structure comprises 341 residues: Holliday junction branch migration complex subunit RuvB (341 aa).

The tract at residues 1–180 (MAKSHTLNPE…FGIQLRLDYY (180 aa)) is large ATPase domain (RuvB-L). Positions 19, 20, 61, 64, 65, 66, 170, 180, and 217 each coordinate ATP. Thr65 serves as a coordination point for Mg(2+). The interval 181-251 (NDEEMKQIVL…LCLKAFEKMG (71 aa)) is small ATPAse domain (RuvB-S). Positions 254 to 341 (DLGLDGMDRQ…VHHGQDPTLF (88 aa)) are head domain (RuvB-H). 2 residues coordinate DNA: Arg309 and Arg314.

The protein belongs to the RuvB family. As to quaternary structure, homohexamer. Forms an RuvA(8)-RuvB(12)-Holliday junction (HJ) complex. HJ DNA is sandwiched between 2 RuvA tetramers; dsDNA enters through RuvA and exits via RuvB. An RuvB hexamer assembles on each DNA strand where it exits the tetramer. Each RuvB hexamer is contacted by two RuvA subunits (via domain III) on 2 adjacent RuvB subunits; this complex drives branch migration. In the full resolvosome a probable DNA-RuvA(4)-RuvB(12)-RuvC(2) complex forms which resolves the HJ.

The protein localises to the cytoplasm. The catalysed reaction is ATP + H2O = ADP + phosphate + H(+). Its function is as follows. The RuvA-RuvB-RuvC complex processes Holliday junction (HJ) DNA during genetic recombination and DNA repair, while the RuvA-RuvB complex plays an important role in the rescue of blocked DNA replication forks via replication fork reversal (RFR). RuvA specifically binds to HJ cruciform DNA, conferring on it an open structure. The RuvB hexamer acts as an ATP-dependent pump, pulling dsDNA into and through the RuvAB complex. RuvB forms 2 homohexamers on either side of HJ DNA bound by 1 or 2 RuvA tetramers; 4 subunits per hexamer contact DNA at a time. Coordinated motions by a converter formed by DNA-disengaged RuvB subunits stimulates ATP hydrolysis and nucleotide exchange. Immobilization of the converter enables RuvB to convert the ATP-contained energy into a lever motion, pulling 2 nucleotides of DNA out of the RuvA tetramer per ATP hydrolyzed, thus driving DNA branch migration. The RuvB motors rotate together with the DNA substrate, which together with the progressing nucleotide cycle form the mechanistic basis for DNA recombination by continuous HJ branch migration. Branch migration allows RuvC to scan DNA until it finds its consensus sequence, where it cleaves and resolves cruciform DNA. The protein is Holliday junction branch migration complex subunit RuvB of Leptospira interrogans serogroup Icterohaemorrhagiae serovar copenhageni (strain Fiocruz L1-130).